A 1388-amino-acid chain; its full sequence is MTTSELVPPPPARRSPRTRRRRQDKPALSARLVLDDHEINGDVGVLSEDLFTDLFPHLRNVPSREDGSEDIHHVAIAPWEPSPSPTETAWTVVPVLKSSALKPSTVQFSPSSLSLQSFATILQQVAPSKLSSHSRSGIEVQILDVVALSLDTVFVSLESELTKRLEQGEGTFFRDRPNKGKGKAPAQPDTPEDRLISALRVALGSLKVLHSGDLFSLPLPPHPVTHVPPNPGKIMLCEPVSQGILSDDTKIVLMRGRVHAKRGQSAPAIPPNRSLNGVPEDDEDDTANDQFYSAAEDRYKTDAATTEMDTVTETEESDLSGVDHDDDLSDDFMDDMISLQAPTLPTTASGVSTMQPGTPMTIGRGRKTNGIATPASVFSNFTATTARPDRPRGRLFKAQGLIRPILIDLLHPKPAPEDDEEARIFVDIASLSKIGCFSGDWVRVEAAEEPPANGFGAFGLGSFTSLEPTESNWRPVRVYGLPEGYSQRPVTRIPSAKHGERRMSFFESQLQKPTSPTAYISPVLLANLESPSYLRLSPIKRGTYQGKGTLPKFTSASRPPYARDITIQHVRSPVTAERAYQSAVLGGLKRYFAQKIRLVRTGDLIAVPIDTQLGKALQEQPSANGSEVDDVMALAKDESCRFDQVAWFKVGHIQTQKTDADHDQTEDLWGGVACIDSSSVAMHGSGFATSRTPATKASTWPYYLGVKKMPMKSNGASALMVPEQDQRFVSPLRRRLRELLAAATSPRAIHLKMPPVAILLTSTHRNIGKATLASEACSDIGLHTYAIDAYDILSEAGTSGGDVKTEGLLRTRSERAMSCGPDTTALLIKHVEALTADRMVSTMKEILQDTRVLVATTSDVDKVPDGVRGLFSHELEVGAPDEAEREGILRTIVEDRGINLDPEVDLNGIALKTAALVAGDLVDVVDRALVAQRLRLEQISSKTGQAVTVRDLQVAGGAMARCVTKGDFDVAVEAARKNFAGAIGAPKIPNVTWDDVGGLNNVKDAVTETIQLPLERPELFAKGMKKRSGILFYGPPGTGKTLLAKAIATEYSLNFFSVKGPELLNMYIGESEANVRRVFQRARDARPCVVFFDELDSVAPKRGNQGDSGGVMDRIVSQLLAELDGMSGGDDTSGGVFVIGATNRPDLLDPALLRPGRFDKMLYLGVSDTHDKQLKILEALTRKFTLHPSVSLHSVAQQLPFTYTGADFYALCSDAMLKAVTRQAASVDAKIRELEAQPRSRTGPISTAYFFDHHATPEDIAVMVTEEDFLAANRELVPSVSAGELSHYEQVRAMFEGPPEKDRQQQQQQQQRPSGLRAVSGSSVVSKGKGKAIAGGSGKGKGKAVATGSDDEYGSEGEVAVVNGKGKGKGKAVAGFQDGTASDDEGLY.

Disordered stretches follow at residues Met-1–Ser-29, Glu-169–Glu-192, Arg-262–Ala-287, Asp-302–Asp-323, and Thr-346–Gly-365. Residues Arg-14–Gln-23 show a composition bias toward basic residues. The span at Glu-169–Asn-178 shows a compositional bias: basic and acidic residues. The span at Thr-310–Asp-323 shows a compositional bias: acidic residues. The span at Thr-346–Thr-358 shows a compositional bias: polar residues. Gly-1034–Thr-1041 contacts ATP. Positions Gly-1297–Tyr-1388 are disordered. Residues Val-1319–Ala-1332 show a composition bias toward low complexity.

The protein belongs to the AAA ATPase family. As to quaternary structure, interacts with PEX1; forming the PEX1-PEX6 AAA ATPase complex, which is composed of a heterohexamer formed by a trimer of PEX1-PEX6 dimers.

It is found in the cytoplasm. The protein localises to the cytosol. Its subcellular location is the peroxisome membrane. It carries out the reaction ATP + H2O = ADP + phosphate + H(+). Its function is as follows. Component of the PEX1-PEX6 AAA ATPase complex, a protein dislocase complex that mediates the ATP-dependent extraction of the PEX5 receptor from peroxisomal membranes, an essential step for PEX5 recycling. Specifically recognizes PEX5 monoubiquitinated at 'Cys-6', and pulls it out of the peroxisome lumen through the PEX2-PEX10-PEX12 retrotranslocation channel. Extraction by the PEX1-PEX6 AAA ATPase complex is accompanied by unfolding of the TPR repeats and release of bound cargo from PEX5. The protein is Peroxisomal ATPase PEX6 (PEX6) of Colletotrichum orbiculare (strain 104-T / ATCC 96160 / CBS 514.97 / LARS 414 / MAFF 240422) (Cucumber anthracnose fungus).